The primary structure comprises 409 residues: Na(+)-translocating NADH-quinone reductase subunit F (409 aa).

A helical transmembrane segment spans residues 5–25; it reads FIFGIIAFTALVLVLAVIILF. The region spanning 34–128 is the 2Fe-2S ferredoxin-type domain; sequence GDITISINDD…SMDVELPEEI (95 aa). Positions 71, 77, 80, and 112 each coordinate [2Fe-2S] cluster. The FAD-binding FR-type domain occupies 131–271; sequence VKKWECTVIS…SGPFGEFFAK (141 aa).

Belongs to the NqrF family. Composed of six subunits; NqrA, NqrB, NqrC, NqrD, NqrE and NqrF. [2Fe-2S] cluster is required as a cofactor. The cofactor is FAD.

The protein localises to the cell inner membrane. The catalysed reaction is a ubiquinone + n Na(+)(in) + NADH + H(+) = a ubiquinol + n Na(+)(out) + NAD(+). Functionally, NQR complex catalyzes the reduction of ubiquinone-1 to ubiquinol by two successive reactions, coupled with the transport of Na(+) ions from the cytoplasm to the periplasm. The first step is catalyzed by NqrF, which accepts electrons from NADH and reduces ubiquinone-1 to ubisemiquinone by a one-electron transfer pathway. The polypeptide is Na(+)-translocating NADH-quinone reductase subunit F (Haemophilus ducreyi (strain 35000HP / ATCC 700724)).